The primary structure comprises 244 residues: Ribonuclease PH (244 aa).

Residues arginine 90 and 128–130 contribute to the phosphate site; that span reads GTR.

Belongs to the RNase PH family. As to quaternary structure, homohexameric ring arranged as a trimer of dimers.

It carries out the reaction tRNA(n+1) + phosphate = tRNA(n) + a ribonucleoside 5'-diphosphate. Phosphorolytic 3'-5' exoribonuclease that plays an important role in tRNA 3'-end maturation. Removes nucleotide residues following the 3'-CCA terminus of tRNAs; can also add nucleotides to the ends of RNA molecules by using nucleoside diphosphates as substrates, but this may not be physiologically important. Probably plays a role in initiation of 16S rRNA degradation (leading to ribosome degradation) during starvation. This Cutibacterium acnes (strain DSM 16379 / KPA171202) (Propionibacterium acnes) protein is Ribonuclease PH.